The sequence spans 179 residues: ATP-dependent protease subunit HslV (179 aa).

The active site involves Thr7. 3 residues coordinate Na(+): Ala162, Cys165, and Thr168.

The protein belongs to the peptidase T1B family. HslV subfamily. In terms of assembly, a double ring-shaped homohexamer of HslV is capped on each side by a ring-shaped HslU homohexamer. The assembly of the HslU/HslV complex is dependent on binding of ATP.

The protein resides in the cytoplasm. The enzyme catalyses ATP-dependent cleavage of peptide bonds with broad specificity.. Allosterically activated by HslU binding. Protease subunit of a proteasome-like degradation complex believed to be a general protein degrading machinery. The chain is ATP-dependent protease subunit HslV from Nitrosococcus oceani (strain ATCC 19707 / BCRC 17464 / JCM 30415 / NCIMB 11848 / C-107).